We begin with the raw amino-acid sequence, 158 residues long: SsrA-binding protein (158 aa).

Positions 136-151 (KRADSKSRDWARDKQR) are enriched in basic and acidic residues. The segment at 136-158 (KRADSKSRDWARDKQRIMKHSTR) is disordered.

The protein belongs to the SmpB family.

The protein localises to the cytoplasm. Functionally, required for rescue of stalled ribosomes mediated by trans-translation. Binds to transfer-messenger RNA (tmRNA), required for stable association of tmRNA with ribosomes. tmRNA and SmpB together mimic tRNA shape, replacing the anticodon stem-loop with SmpB. tmRNA is encoded by the ssrA gene; the 2 termini fold to resemble tRNA(Ala) and it encodes a 'tag peptide', a short internal open reading frame. During trans-translation Ala-aminoacylated tmRNA acts like a tRNA, entering the A-site of stalled ribosomes, displacing the stalled mRNA. The ribosome then switches to translate the ORF on the tmRNA; the nascent peptide is terminated with the 'tag peptide' encoded by the tmRNA and targeted for degradation. The ribosome is freed to recommence translation, which seems to be the essential function of trans-translation. This Photobacterium profundum (strain SS9) protein is SsrA-binding protein.